We begin with the raw amino-acid sequence, 141 residues long: Large ribosomal subunit protein uL11 (141 aa).

It belongs to the universal ribosomal protein uL11 family. In terms of assembly, part of the ribosomal stalk of the 50S ribosomal subunit. Interacts with L10 and the large rRNA to form the base of the stalk. L10 forms an elongated spine to which L12 dimers bind in a sequential fashion forming a multimeric L10(L12)X complex. Post-translationally, one or more lysine residues are methylated.

In terms of biological role, forms part of the ribosomal stalk which helps the ribosome interact with GTP-bound translation factors. The protein is Large ribosomal subunit protein uL11 of Tropheryma whipplei (strain TW08/27) (Whipple's bacillus).